We begin with the raw amino-acid sequence, 496 residues long: Pup--protein ligase (496 aa).

Position 30 (Glu30) interacts with Mg(2+). Arg73 serves as a coordination point for ATP. Position 75 (Tyr75) interacts with Mg(2+). Catalysis depends on Asp77, which acts as the Proton acceptor. Residue Glu83 coordinates Mg(2+). Positions 86 and 450 each coordinate ATP.

The protein belongs to the Pup ligase/Pup deamidase family. Pup-conjugating enzyme subfamily.

It carries out the reaction ATP + [prokaryotic ubiquitin-like protein]-L-glutamate + [protein]-L-lysine = ADP + phosphate + N(6)-([prokaryotic ubiquitin-like protein]-gamma-L-glutamyl)-[protein]-L-lysine.. It participates in protein degradation; proteasomal Pup-dependent pathway. Its pathway is protein modification; protein pupylation. Its function is as follows. Catalyzes the covalent attachment of the prokaryotic ubiquitin-like protein modifier Pup to the proteasomal substrate proteins, thereby targeting them for proteasomal degradation. This tagging system is termed pupylation. The ligation reaction involves the side-chain carboxylate of the C-terminal glutamate of Pup and the side-chain amino group of a substrate lysine. The protein is Pup--protein ligase of Bifidobacterium animalis subsp. lactis (strain AD011).